We begin with the raw amino-acid sequence, 167 residues long: Putative pre-16S rRNA nuclease (167 aa).

The protein belongs to the YqgF nuclease family.

The protein resides in the cytoplasm. In terms of biological role, could be a nuclease involved in processing of the 5'-end of pre-16S rRNA. This is Putative pre-16S rRNA nuclease from Streptomyces coelicolor (strain ATCC BAA-471 / A3(2) / M145).